Reading from the N-terminus, the 632-residue chain is Probable potassium transport system protein Kup (632 aa).

The next 12 helical transmembrane spans lie at 17–37, 60–80, 106–126, 146–166, 175–195, 210–230, 254–274, 292–312, 344–364, 370–390, 401–421, and 426–446; these read LFYL…TSPL, LISL…VLFL, TAIL…DAMI, LSEY…VVQS, FFGP…ISHI, AVSF…AVFL, WFLL…ALVL, ALLP…QAVI, IFVP…VLSF, LATA…IMAF, LPVA…FLGA, and IHDG…IMWT.

This sequence belongs to the HAK/KUP transporter (TC 2.A.72) family.

It localises to the cell inner membrane. The enzyme catalyses K(+)(in) + H(+)(in) = K(+)(out) + H(+)(out). Functionally, transport of potassium into the cell. Likely operates as a K(+):H(+) symporter. This is Probable potassium transport system protein Kup from Rhizobium rhizogenes (Agrobacterium rhizogenes).